Reading from the N-terminus, the 220-residue chain is Urease accessory protein UreG (220 aa).

Residue 18–25 participates in GTP binding; that stretch reads GPVGSGKT.

The protein belongs to the SIMIBI class G3E GTPase family. UreG subfamily. As to quaternary structure, homodimer. UreD, UreF and UreG form a complex that acts as a GTP-hydrolysis-dependent molecular chaperone, activating the urease apoprotein by helping to assemble the nickel containing metallocenter of UreC. The UreE protein probably delivers the nickel.

It localises to the cytoplasm. Its function is as follows. Facilitates the functional incorporation of the urease nickel metallocenter. This process requires GTP hydrolysis, probably effectuated by UreG. The sequence is that of Urease accessory protein UreG from Yersinia pestis.